The chain runs to 944 residues: Translation factor GUF1 homolog, mitochondrial (944 aa).

A tr-type G domain is found at 201–379 (KNVRNFCILA…IITDIPYPPI (179 aa)). Residues 210–217 (AHIDSGKS), 271–275 (DTPGH), and 325–328 (NKID) contribute to the GTP site.

It belongs to the TRAFAC class translation factor GTPase superfamily. Classic translation factor GTPase family. LepA subfamily.

The protein localises to the mitochondrion inner membrane. It catalyses the reaction GTP + H2O = GDP + phosphate + H(+). Its function is as follows. Promotes mitochondrial protein synthesis. May act as a fidelity factor of the translation reaction, by catalyzing a one-codon backward translocation of tRNAs on improperly translocated ribosomes. Binds to mitochondrial ribosomes in a GTP-dependent manner. In Plasmodium yoelii yoelii, this protein is Translation factor GUF1 homolog, mitochondrial.